We begin with the raw amino-acid sequence, 349 residues long: 4-hydroxythreonine-4-phosphate dehydrogenase (349 aa).

Substrate-binding residues include His141 and Thr142. A divalent metal cation is bound by residues His176, His221, and His276. Positions 284, 293, and 302 each coordinate substrate.

This sequence belongs to the PdxA family. As to quaternary structure, homodimer. Zn(2+) serves as cofactor. Mg(2+) is required as a cofactor. The cofactor is Co(2+).

It is found in the cytoplasm. It carries out the reaction 4-(phosphooxy)-L-threonine + NAD(+) = 3-amino-2-oxopropyl phosphate + CO2 + NADH. The protein operates within cofactor biosynthesis; pyridoxine 5'-phosphate biosynthesis; pyridoxine 5'-phosphate from D-erythrose 4-phosphate: step 4/5. Its function is as follows. Catalyzes the NAD(P)-dependent oxidation of 4-(phosphooxy)-L-threonine (HTP) into 2-amino-3-oxo-4-(phosphooxy)butyric acid which spontaneously decarboxylates to form 3-amino-2-oxopropyl phosphate (AHAP). This is 4-hydroxythreonine-4-phosphate dehydrogenase from Methylorubrum extorquens (strain PA1) (Methylobacterium extorquens).